We begin with the raw amino-acid sequence, 334 residues long: Transposase for insertion sequence element IS1328 (334 aa).

Belongs to the transposase IS1111A/IS1328/IS1533 family.

Required for the transposition of the insertion element. This chain is Transposase for insertion sequence element IS1328, found in Yersinia enterocolitica.